Here is a 179-residue protein sequence, read N- to C-terminus: Large ribosomal subunit protein uL5 (179 aa).

It belongs to the universal ribosomal protein uL5 family. Part of the 50S ribosomal subunit; part of the 5S rRNA/L5/L18/L25 subcomplex. Contacts the 5S rRNA and the P site tRNA. Forms a bridge to the 30S subunit in the 70S ribosome.

Its function is as follows. This is one of the proteins that bind and probably mediate the attachment of the 5S RNA into the large ribosomal subunit, where it forms part of the central protuberance. In the 70S ribosome it contacts protein S13 of the 30S subunit (bridge B1b), connecting the 2 subunits; this bridge is implicated in subunit movement. Contacts the P site tRNA; the 5S rRNA and some of its associated proteins might help stabilize positioning of ribosome-bound tRNAs. The polypeptide is Large ribosomal subunit protein uL5 (Bordetella bronchiseptica (strain ATCC BAA-588 / NCTC 13252 / RB50) (Alcaligenes bronchisepticus)).